The sequence spans 72 residues: Alpha-elapitoxin-Dv2b (72 aa).

5 cysteine pairs are disulfide-bonded: Cys3–Cys21, Cys14–Cys42, Cys27–Cys31, Cys46–Cys57, and Cys58–Cys63.

This sequence belongs to the three-finger toxin family. Long-chain subfamily. Type II alpha-neurotoxin sub-subfamily. Post-translationally, neurotoxin 4.7.3 differs from 4.9.3 only in that Trp-26 has undergone partial photooxidation. Expressed by the venom gland.

The protein resides in the secreted. Functionally, binds with high affinity to muscular (alpha-1/CHRNA1) and neuronal (alpha-7/CHRNA7) nicotinic acetylcholine receptor (nAChR) and inhibits acetylcholine from binding to the receptor, thereby impairing neuromuscular and neuronal transmission. The polypeptide is Alpha-elapitoxin-Dv2b (Dendroaspis viridis (Western green mamba)).